The following is a 255-amino-acid chain: Taurine import ATP-binding protein TauB (255 aa).

The ABC transporter domain maps to 2–229 (LQISHLYADY…RFVAGESSRS (228 aa)). Residue 34-41 (GPSGCGKT) participates in ATP binding.

It belongs to the ABC transporter superfamily. Taurine importer (TC 3.A.1.17.1) family. In terms of assembly, the complex is composed of two ATP-binding proteins (TauB), two transmembrane proteins (TauC) and a solute-binding protein (TauA).

It localises to the cell inner membrane. The enzyme catalyses taurine(out) + ATP + H2O = taurine(in) + ADP + phosphate + H(+). Part of the ABC transporter complex TauABC involved in taurine import. Responsible for energy coupling to the transport system. This is Taurine import ATP-binding protein TauB from Shigella dysenteriae serotype 1 (strain Sd197).